We begin with the raw amino-acid sequence, 237 residues long: Putative exosome complex component rrp40 (237 aa).

One can recognise an S1 motif domain in the interval 67–137; it reads EDMVIGTIIE…EPEVVCLSQK (71 aa).

This sequence belongs to the RRP40 family. As to quaternary structure, component of the RNA exosome complex.

It is found in the cytoplasm. Its subcellular location is the nucleus. The protein resides in the nucleolus. Its function is as follows. Non-catalytic component of the RNA exosome complex which has 3'-&gt;5' exoribonuclease activity and participates in a multitude of cellular RNA processing and degradation events. This Dictyostelium discoideum (Social amoeba) protein is Putative exosome complex component rrp40 (exosc3).